Reading from the N-terminus, the 251-residue chain is HTH-type transcriptional regulator UlaR (251 aa).

Positions 3 to 58 constitute an HTH deoR-type domain; that stretch reads EAQRHQILLEMLAQLGFVTVEKVVERLGISPATARRDINKLDESGKLKKVRNGAEA. A DNA-binding region (H-T-H motif) is located at residues 20–39; sequence VTVEKVVERLGISPATARRD.

It localises to the cytoplasm. Its function is as follows. Represses ulaG and the ulaABCDEF operon. The chain is HTH-type transcriptional regulator UlaR from Shigella dysenteriae serotype 1 (strain Sd197).